A 483-amino-acid chain; its full sequence is Probable glycine dehydrogenase (decarboxylating) subunit 2 (483 aa).

The residue at position 267 (Lys267) is an N6-(pyridoxal phosphate)lysine.

This sequence belongs to the GcvP family. C-terminal subunit subfamily. The glycine cleavage system is composed of four proteins: P, T, L and H. In this organism, the P 'protein' is a heterodimer of two subunits. Requires pyridoxal 5'-phosphate as cofactor.

The catalysed reaction is N(6)-[(R)-lipoyl]-L-lysyl-[glycine-cleavage complex H protein] + glycine + H(+) = N(6)-[(R)-S(8)-aminomethyldihydrolipoyl]-L-lysyl-[glycine-cleavage complex H protein] + CO2. In terms of biological role, the glycine cleavage system catalyzes the degradation of glycine. The P protein binds the alpha-amino group of glycine through its pyridoxal phosphate cofactor; CO(2) is released and the remaining methylamine moiety is then transferred to the lipoamide cofactor of the H protein. This is Probable glycine dehydrogenase (decarboxylating) subunit 2 from Kosmotoga olearia (strain ATCC BAA-1733 / DSM 21960 / TBF 19.5.1).